We begin with the raw amino-acid sequence, 246 residues long: Phosphomannomutase (246 aa).

Residue aspartate 9 is the Nucleophile of the active site. Aspartate 9 and aspartate 11 together coordinate Mg(2+). Aspartate 11 serves as the catalytic Proton donor/acceptor. Positions 121, 132, 139, 179, and 181 each coordinate alpha-D-mannose 1-phosphate. Position 207 (aspartate 207) interacts with Mg(2+).

It belongs to the eukaryotic PMM family. In terms of assembly, homodimer.

The protein resides in the cytoplasm. The enzyme catalyses alpha-D-mannose 1-phosphate = D-mannose 6-phosphate. It participates in nucleotide-sugar biosynthesis; GDP-alpha-D-mannose biosynthesis; alpha-D-mannose 1-phosphate from D-fructose 6-phosphate: step 2/2. Involved in the synthesis of the GDP-mannose and dolichol-phosphate-mannose required for a number of critical mannosyl transfer reactions. This is Phosphomannomutase (PMM) from Babesia bovis.